The following is a 1767-amino-acid chain: MGGKNKQRTKGNLRPSNSGRAAELLAKEQGTVPGFIGFGTSHSDLGYVPAVQGAEDIDSLVDSDFRMVLRKLSKKDVTTKLKAMQEFGIMCTERDTEAVKGVLPYWPRIFCKISLDHDRRVREATQQAFEKLILKVKKHLAPYLKSVMGYWLMAQCDTYPPAALAAKDAFEAAFPPSKQPEAIAFCKEEITTVLQDHLLKETPDTLSDPQTVPEEEREAKFHRVVTCSLLALKRLLCFLPNNELDSLEEKFKSLLSQNKFWKYGKHSVPQVRSAYFELVSALCQHVPQVMKEEAAKVSPSVLLSIDDSDPVVCPALWEAVLYTLTTIEDCWFHVNAKKSVFPKLMAMIREGGRGLAAVMYPYLLPFISKLPQSITEPKLDFFKNFLTSLVTGLSTERTKSSSSECSAVISAFFECLRFIMQQNLGEEEMVQMLINEQLIPFIDTVLKDSGLHHGPMFDHLADTLSSWEAKADAERDPGAVYNLENVLLSFWGRLSEICTEKIRQPEADVKSVLCVSSLVGVLQRPRSSLKLHRKKTAQVRFAINIPEAHKGDEKSMSSEGENSEGSDGGAQSPLSNTSSDLVSPLRKKPLEDLVCKLAEVSISFVNERKSEQHLQFLSTLLDSFSSVQVFNILLSDKQKNVVKAKPLEITKLAEKNPAVKFLYHKLIGWLNDSQKEDGGFLVDILYSALRCCDSGVERKEVLDDLTKEDLKWSSLLQVIEKACSSSDKHALVTPWLKGSILGEKLVALADCLCDKDLEATTSESHSSEQWSLLRLALSQHVKNDYLIGEVYVGRIIVKLHETLSKTKDLSEAANSDSSVSFVCDVVHSFFSSAGGGLLMPPSEDLLLTLFQLCAQSKERTHLPDFLICKLKNTLLSGVNLLVHQTASTYEQSTFLRLSVLWLKDQVQSSALDNTSLQVLLSAAGDLLGTLVESEDTSLLGVYIGSVMPSDSEWEKMRQALPVQWLHRPLLEGRLSLNYECFKTDFKEQDTKTLPNHLCTSSLLSKMILVAQKKKLVLEDNVLEKIIAELLYSLQWCEELDNAPSFLSGFCGILQKMNITYSNLSVLSETSSLLQLLFDRSRKNGTLWSLIIAKLILSRSISSDEVKPYYKRKESFFPLTEGSLHTIQSLCPFLSKEEKKEFSAQCIPAFLGWTKEDLCSINGAFGHLAIFNSCLQTRSIDDKQLLHGILKIITSWRKQHEDIFLFSCNLSEASPEVLGLNIEIMRFLSLFLKHCAYPLPLADSEWDFIMCSMLAWLETTSENQALYSVPLVQLFACVSFDLACDLCAFFDSITPDIVDNLPVNLISEWKEFFSKGIHSLLLPLLVNAIGENKDLSETSFQNAMLKPMCETLTYISKDQLLSHKLPARLVASQKTNLPEHLQTLLNTLTPLLLFRARPVQIAAYHMLCKLMPELPQHDQDNLRSYGDEEEEPALSPPAALMSLLSSQEELLENVLGCVPVGQIVTVKPLSEDFCYVLGYLLTWKLILTFFKAASSQLRALYSMYLRKTKSLNKLLYHLFRLMPENPTYGETAIEVSSKDPKTFFTEEVQLSIRETATLPYHIPHLACSVYHMTLKDLPAMVRLWWNSSEKRVFNIVDRFTSKYVSNVLSFQEISSVQTSTQLFNGMTVKARATTREVMATYTIEDIVIELIIQLPSNYPLGSITVESGKRIGVAVQQWRNWMLQLSTYLTHQNGSIMEGLALWKNNVDKRFEGVEDCMICFSVIHGFNYSLPKKACRTCKKKFHSACLYKWFTSSNKSTCPLCRETFF.

HEAT repeat units follow at residues Ser-59–Thr-96, Lys-100–Lys-138, Ser-273–Pro-314, Asn-335–Gln-372, Asp-380–Phe-418, Leu-433–Ala-473, and Val-509–Glu-547. A disordered region spans residues Lys-550–Ser-583. Residues Ser-572–Leu-581 show a composition bias toward polar residues. HEAT repeat units lie at residues Leu-621 to Ala-658, Glu-676 to Ser-714, Ser-1067 to Glu-1104, Gln-1183 to Phe-1226, Gly-1315 to Tyr-1353, Glu-1378 to Gln-1415, and Leu-1476 to Leu-1513. The RING-type zinc-finger motif lies at Cys-1716 to Arg-1763.

This sequence belongs to the LTN1 family. In terms of assembly, component of the ribosome quality control complex (RQC), composed of at least the E3 ubiquitin ligase LTN1 and NEMF associated with the 60S ribosomal subunit. The complex probably also contains TCF25 as well as VCP/p97 and its ubiquitin-binding cofactors. Autoubiquitinated. As to expression, widely expressed, including in the brain and spinal cord.

It is found in the cytoplasm. The protein localises to the cytosol. It catalyses the reaction S-ubiquitinyl-[E2 ubiquitin-conjugating enzyme]-L-cysteine + [acceptor protein]-L-lysine = [E2 ubiquitin-conjugating enzyme]-L-cysteine + N(6)-ubiquitinyl-[acceptor protein]-L-lysine.. It participates in protein modification; protein ubiquitination. In terms of biological role, E3 ubiquitin-protein ligase. component of the ribosome quality control complex (RQC), a ribosome-associated complex that mediates ubiquitination and extraction of incompletely synthesized nascent chains for proteasomal degradation. Within the RQC complex, LTN1 is recruited to stalled 60S ribosomal subunits by NEMF and mediates ubiquitination of stalled nascent chains. Ubiquitination leads to VCP/p97 recruitment for extraction and degradation of the incomplete translation product. The polypeptide is E3 ubiquitin-protein ligase listerin (Ltn1) (Mus musculus (Mouse)).